We begin with the raw amino-acid sequence, 180 residues long: Pyruvoyl-dependent arginine decarboxylase (180 aa).

Pyruvic acid (Ser) is present on Ser41.

This sequence belongs to the PdaD family. It depends on pyruvate as a cofactor.

The catalysed reaction is L-arginine + H(+) = agmatine + CO2. In Methanococcoides burtonii (strain DSM 6242 / NBRC 107633 / OCM 468 / ACE-M), this protein is Pyruvoyl-dependent arginine decarboxylase.